Here is a 250-residue protein sequence, read N- to C-terminus: Small ribosomal subunit protein uS3 (250 aa).

The region spanning 39–107 is the KH type-2 domain; sequence VREFLTKKLK…PAQVSINEID (69 aa). Positions 215–250 are disordered; the sequence is MNPAPAEERPAKRGRGRGEGQERRGRRGDRAADKGE. Positions 220 to 250 are enriched in basic and acidic residues; it reads AEERPAKRGRGRGEGQERRGRRGDRAADKGE.

The protein belongs to the universal ribosomal protein uS3 family. As to quaternary structure, part of the 30S ribosomal subunit. Forms a tight complex with proteins S10 and S14.

In terms of biological role, binds the lower part of the 30S subunit head. Binds mRNA in the 70S ribosome, positioning it for translation. The sequence is that of Small ribosomal subunit protein uS3 from Acinetobacter baumannii (strain SDF).